The sequence spans 137 residues: Ribosome-binding factor A (137 aa).

Residues 112 to 137 are disordered; the sequence is KKDEVKEDESHEDESTDHTEETNEEP. Residues 127-137 are compositionally biased toward basic and acidic residues; that stretch reads TDHTEETNEEP.

Belongs to the RbfA family. Monomer. Binds 30S ribosomal subunits, but not 50S ribosomal subunits or 70S ribosomes.

It is found in the cytoplasm. One of several proteins that assist in the late maturation steps of the functional core of the 30S ribosomal subunit. Associates with free 30S ribosomal subunits (but not with 30S subunits that are part of 70S ribosomes or polysomes). Required for efficient processing of 16S rRNA. May interact with the 5'-terminal helix region of 16S rRNA. This chain is Ribosome-binding factor A, found in Coprothermobacter proteolyticus (strain ATCC 35245 / DSM 5265 / OCM 4 / BT).